A 397-amino-acid polypeptide reads, in one-letter code: Ubiquitin-like modifier-activating enzyme 5 (397 aa).

Residues G76, D97, K120, N143, and N177 each coordinate ATP. C219 and C222 together coordinate Zn(2+). The active-site Glycyl thioester intermediate is C243. C296 and C301 together coordinate Zn(2+). Positions 327–339 (IVHEDNDWGIELV) match the UFM1-interacting sequence (UIS) motif. A linker region spans residues 340 to 370 (SETTEDELKAASGPVPDLPVGITVAYTIPNK). A UFC1-binding sequence (UFC) motif is present at residues 382-397 (ESEESLEDLMAKMRNL).

It belongs to the ubiquitin-activating E1 family. UBA5 subfamily. In terms of assembly, homodimer; homodimerization is required for UFM1 activation. Interacts (via UIS motif) with UFM1; binds UFM1 via a trans-binding mechanism in which UFM1 interacts with distinct sites in both subunits of the UBA5 homodimer. Interacts (via C-terminus) with UFC1.

Its subcellular location is the cytoplasm. It localises to the nucleus. The protein resides in the endoplasmic reticulum membrane. It is found in the golgi apparatus. In terms of biological role, E1-like enzyme which specifically catalyzes the first step in ufmylation. Activates UFM1 by first adenylating its C-terminal glycine residue with ATP, and thereafter linking this residue to the side chain of a cysteine residue in E1, yielding a UFM1-E1 thioester and free AMP. Activates UFM1 via a trans-binding mechanism, in which UFM1 interacts with distinct sites in both subunits of the UBA5 homodimer. Trans-binding also promotes stabilization of the UBA5 homodimer, and enhances ATP-binding. Transfer of UFM1 from UBA5 to the E2-like enzyme UFC1 also takes place using a trans mechanism. Ufmylation plays a key role in various processes, such as ribosome recycling, response to DNA damage, interferon response or reticulophagy (also called ER-phagy). This Gallus gallus (Chicken) protein is Ubiquitin-like modifier-activating enzyme 5.